Reading from the N-terminus, the 224-residue chain is 7-cyano-7-deazaguanine synthase (224 aa).

Residue 8-18 participates in ATP binding; sequence VSGGADSATVL. Zn(2+) contacts are provided by C189, C199, C202, and C205.

Belongs to the QueC family. Zn(2+) serves as cofactor.

The enzyme catalyses 7-carboxy-7-deazaguanine + NH4(+) + ATP = 7-cyano-7-deazaguanine + ADP + phosphate + H2O + H(+). Its pathway is purine metabolism; 7-cyano-7-deazaguanine biosynthesis. Catalyzes the ATP-dependent conversion of 7-carboxy-7-deazaguanine (CDG) to 7-cyano-7-deazaguanine (preQ(0)). The polypeptide is 7-cyano-7-deazaguanine synthase (Rickettsia felis (strain ATCC VR-1525 / URRWXCal2) (Rickettsia azadi)).